We begin with the raw amino-acid sequence, 530 residues long: AAA-ATPase At3g28510 (530 aa).

A helical transmembrane segment spans residues 5–25; that stretch reads GAIWGITGTTVTSFMFFWAIY. 250-257 contacts ATP; sequence GPPGTGKS. Disordered stretches follow at residues 312-339 and 463-530; these read QRKKKKEEDEEEDGEEKKEGEKKPKVDD and KARK…KSDS. Basic and acidic residues-rich tracts occupy residues 326–339 and 463–511; these read EEKKEGEKKPKVDD and KARK…KEEN. The span at 512-523 shows a compositional bias: polar residues; the sequence is GNVSQQNGNSID.

It belongs to the AAA ATPase family. BCS1 subfamily. Requires Mg(2+) as cofactor.

The protein resides in the membrane. The enzyme catalyses ATP + H2O = ADP + phosphate + H(+). The protein is AAA-ATPase At3g28510 of Arabidopsis thaliana (Mouse-ear cress).